Reading from the N-terminus, the 363-residue chain is Mannose-1-phosphate guanyltransferase (363 aa).

The protein belongs to the transferase hexapeptide repeat family.

It localises to the cytoplasm. The enzyme catalyses alpha-D-mannose 1-phosphate + GTP + H(+) = GDP-alpha-D-mannose + diphosphate. It functions in the pathway nucleotide-sugar biosynthesis; GDP-alpha-D-mannose biosynthesis; GDP-alpha-D-mannose from alpha-D-mannose 1-phosphate (GTP route): step 1/1. Involved in cell wall synthesis where it is required for glycosylation. Involved in cell cycle progression through cell-size checkpoint. Required for the correct assembly of the septum. The chain is Mannose-1-phosphate guanyltransferase (mpg1) from Schizosaccharomyces pombe (strain 972 / ATCC 24843) (Fission yeast).